Consider the following 492-residue polypeptide: Cytochrome P450 2L1 (492 aa).

Cys-436 serves as a coordination point for heme.

This sequence belongs to the cytochrome P450 family. Heme serves as cofactor.

It localises to the endoplasmic reticulum membrane. The protein localises to the microsome membrane. The enzyme catalyses an organic molecule + reduced [NADPH--hemoprotein reductase] + O2 = an alcohol + oxidized [NADPH--hemoprotein reductase] + H2O + H(+). Efficient in catalyzing the monooxygenation of benzphetamine, aminopyrine, benzo(a)pyrene, progesterone, and testosterone. The chain is Cytochrome P450 2L1 (CYP2L1) from Panulirus argus (Caribbean spiny lobster).